Consider the following 343-residue polypeptide: UDP-3-O-acylglucosamine N-acyltransferase 2 (343 aa).

Catalysis depends on His-251, which acts as the Proton acceptor.

This sequence belongs to the transferase hexapeptide repeat family. LpxD subfamily. In terms of assembly, homotrimer.

The enzyme catalyses a UDP-3-O-[(3R)-3-hydroxyacyl]-alpha-D-glucosamine + a (3R)-hydroxyacyl-[ACP] = a UDP-2-N,3-O-bis[(3R)-3-hydroxyacyl]-alpha-D-glucosamine + holo-[ACP] + H(+). The protein operates within bacterial outer membrane biogenesis; LPS lipid A biosynthesis. Functionally, catalyzes the N-acylation of UDP-3-O-acylglucosamine using 3-hydroxyacyl-ACP as the acyl donor. Is involved in the biosynthesis of lipid A, a phosphorylated glycolipid that anchors the lipopolysaccharide to the outer membrane of the cell. This Legionella pneumophila subsp. pneumophila (strain Philadelphia 1 / ATCC 33152 / DSM 7513) protein is UDP-3-O-acylglucosamine N-acyltransferase 2.